Consider the following 525-residue polypeptide: MTENIHKHRILILDFGSQYTQLVARRVRELGVYCELWAWDVTEAQIREFNPSGIILSGGPESTTEENSPRAPEYVFEAGVPVFGVCYGMQTMAMQLGGHVEASNEREFGYAQVEVRTNSALIRGIEDSLTADGKPLLDVWMSHGDKVTAIPSDFVTVASTETCPFAIMANEEKRFYGVQFHPEVTHTRQGMRMLERFVRDICQCEALWTPAKIIDDAVNRIREQVGDDKVILGLSGGVDSSVTAMLLHRAIGKNLTCVFVDNGLLRLNEAEQVMDMFGDHFGLNIVHVPAEERFLTALKGENDPEAKRKIIGRVFVEVFDEEAFRLEDVKWLAQGTIYPDVIESAASATGKAHVIKSHHNVGGLPKEMKMGLVEPLKELFKDEVRKIGLELGLPYDMLYRHPFPGPGLGVRVLGEVKKEYCDLLRRADAIFIEELHKADLYNKVSQAFTVFLPVRSVGVMGDGRKYDWVVSLRAVETIDFMTAHWAHLPYDFLGRVSNRIINEVNGISRVVYDISGKPPATIEWE.

The 199-residue stretch at 9-207 (RILILDFGSQ…VRDICQCEAL (199 aa)) folds into the Glutamine amidotransferase type-1 domain. Catalysis depends on cysteine 86, which acts as the Nucleophile. Catalysis depends on residues histidine 181 and glutamate 183. The GMPS ATP-PPase domain maps to 208–400 (WTPAKIIDDA…LGLPYDMLYR (193 aa)). 235 to 241 (SGGVDSS) contributes to the ATP binding site.

Homodimer.

It carries out the reaction XMP + L-glutamine + ATP + H2O = GMP + L-glutamate + AMP + diphosphate + 2 H(+). The protein operates within purine metabolism; GMP biosynthesis; GMP from XMP (L-Gln route): step 1/1. In terms of biological role, catalyzes the synthesis of GMP from XMP. This is GMP synthase [glutamine-hydrolyzing] from Citrobacter koseri (strain ATCC BAA-895 / CDC 4225-83 / SGSC4696).